The chain runs to 464 residues: NADH dehydrogenase [ubiquinone] flavoprotein 1, mitochondrial (464 aa).

The N-terminal 20 residues, 1–20 (MLAARRLLGGSLPSRVSVRF), are a transit peptide targeting the mitochondrion. Lysine 81 is modified (N6-acetyllysine; alternate). Residue lysine 81 is modified to N6-succinyllysine; alternate. 87–96 (GRGGAGFPTG) is an NADH binding site. An N6-acetyllysine modification is found at lysine 104. 199-247 (RGAGAYICGEETALIESIEGKQGKPRLKPPFPADVGVFGCPTTVANVET) is a binding site for FMN. Residue arginine 257 is modified to Omega-N-methylarginine. Residue lysine 375 is modified to N6-acetyllysine. Residues cysteine 379, cysteine 382, cysteine 385, and cysteine 425 each coordinate [4Fe-4S] cluster.

This sequence belongs to the complex I 51 kDa subunit family. As to quaternary structure, core subunit of respiratory chain NADH dehydrogenase (Complex I) which is composed of 45 different subunits. This is a component of the flavoprotein-sulfur (FP) fragment of the enzyme. Interacts with RAB5IF. It depends on FMN as a cofactor. [4Fe-4S] cluster is required as a cofactor.

It is found in the mitochondrion inner membrane. The catalysed reaction is a ubiquinone + NADH + 5 H(+)(in) = a ubiquinol + NAD(+) + 4 H(+)(out). Core subunit of the mitochondrial membrane respiratory chain NADH dehydrogenase (Complex I) which catalyzes electron transfer from NADH through the respiratory chain, using ubiquinone as an electron acceptor. Part of the peripheral arm of the enzyme, where the electrons from NADH are accepted by flavin mononucleotide (FMN) and then passed along a chain of iron-sulfur clusters by electron tunnelling to the final acceptor ubiquinone. Contains FMN, which is the initial electron acceptor as well as one iron-sulfur cluster. The polypeptide is NADH dehydrogenase [ubiquinone] flavoprotein 1, mitochondrial (Macaca fascicularis (Crab-eating macaque)).